Here is a 250-residue protein sequence, read N- to C-terminus: Histone H1.1 (250 aa).

Positions 1–11 (MSDSAVATSAS) are enriched in polar residues. 2 disordered regions span residues 1–52 (MSDS…QQMV) and 104–250 (QTKG…ATKK). In terms of domain architecture, H15 spans 44–118 (SHPPTQQMVD…GASGSFKLSA (75 aa)). Over residues 122–133 (KDAKPKASAVEK) the composition is skewed to basic and acidic residues. Low complexity predominate over residues 140-161 (ASAARATKSKSSTSTTKKAAGA). Residues 174-191 (KNVEKKKADKEKAKDAKK) are compositionally biased toward basic and acidic residues. Over residues 192–234 (TGTIKAKPTTAKAKSSATKPKTPKPKTTSAKPKKVVSATTPKK) the composition is skewed to low complexity. Basic residues predominate over residues 235–250 (TAVKKPKAKTASATKK).

Belongs to the histone H1/H5 family.

It localises to the nucleus. Its subcellular location is the chromosome. Histones H1 are necessary for the condensation of nucleosome chains into higher-order structures. The chain is Histone H1.1 (His1.1) from Drosophila virilis (Fruit fly).